A 185-amino-acid chain; its full sequence is Large ribosomal subunit protein bL25 (185 aa).

It belongs to the bacterial ribosomal protein bL25 family. CTC subfamily. As to quaternary structure, part of the 50S ribosomal subunit; part of the 5S rRNA/L5/L18/L25 subcomplex. Contacts the 5S rRNA. Binds to the 5S rRNA independently of L5 and L18.

Its function is as follows. This is one of the proteins that binds to the 5S RNA in the ribosome where it forms part of the central protuberance. The sequence is that of Large ribosomal subunit protein bL25 from Laribacter hongkongensis (strain HLHK9).